The chain runs to 436 residues: Kynureninase (436 aa).

Pyridoxal 5'-phosphate-binding positions include Leu-88, Thr-89, 116-119, Asp-202, His-205, and Tyr-227; that span reads FPSD. Lys-228 is modified (N6-(pyridoxal phosphate)lysine). Pyridoxal 5'-phosphate-binding residues include Trp-280 and Asn-308.

The protein belongs to the kynureninase family. Homodimer. The cofactor is pyridoxal 5'-phosphate.

It localises to the cytoplasm. The catalysed reaction is L-kynurenine + H2O = anthranilate + L-alanine + H(+). It catalyses the reaction 3-hydroxy-L-kynurenine + H2O = 3-hydroxyanthranilate + L-alanine + H(+). It functions in the pathway amino-acid degradation; L-kynurenine degradation; L-alanine and anthranilate from L-kynurenine: step 1/1. Its pathway is cofactor biosynthesis; NAD(+) biosynthesis; quinolinate from L-kynurenine: step 2/3. In terms of biological role, catalyzes the cleavage of L-kynurenine (L-Kyn) and L-3-hydroxykynurenine (L-3OHKyn) into anthranilic acid (AA) and 3-hydroxyanthranilic acid (3-OHAA), respectively. The polypeptide is Kynureninase (Schistosoma japonicum (Blood fluke)).